Reading from the N-terminus, the 266-residue chain is Glutamate racemase (266 aa).

Substrate is bound by residues 9-10 (DS) and 41-42 (YG). The active-site Proton donor/acceptor is Cys72. 73–74 (NT) provides a ligand contact to substrate. Cys184 functions as the Proton donor/acceptor in the catalytic mechanism. 185–186 (TH) provides a ligand contact to substrate.

It belongs to the aspartate/glutamate racemases family.

The catalysed reaction is L-glutamate = D-glutamate. It functions in the pathway cell wall biogenesis; peptidoglycan biosynthesis. Its function is as follows. Provides the (R)-glutamate required for cell wall biosynthesis. This chain is Glutamate racemase, found in Staphylococcus aureus (strain Mu3 / ATCC 700698).